A 957-amino-acid polypeptide reads, in one-letter code: ERC protein 2 (957 aa).

The span at 1–13 shows a compositional bias: polar residues; that stretch reads MYGSARTISNPEG. The disordered stretch occupies residues 1 to 44; the sequence is MYGSARTISNPEGSPSRSPRLPRSPRLGHRRTSSGGGGGTGKTL. Residues 14–25 show a composition bias toward low complexity; it reads SPSRSPRLPRSP. Phosphoserine occurs at positions 65 and 666. Residues 140-917 are a coiled coil; the sequence is RQVRDSTMLD…RMKLMADNYD (778 aa). Residues 760–957 are involved in binding to RIMS1; that stretch reads DQNKKVANLK…DQDDEEGIWA (198 aa). Positions 918–957 are disordered; it reads DDHHHYHHHHHHHHHRSPGRSQHSNHRPSPDQDDEEGIWA. Positions 922–943 are enriched in basic residues; it reads HYHHHHHHHHHRSPGRSQHSNH. Acidic residues predominate over residues 948 to 957; sequence DQDDEEGIWA.

Interacts with BSN, ERC1, PPFIA1, PPFIA2, PPFIA3 and PPFIA4. Interacts through its C-terminus with the PDZ domain of RIMS1. Part of a complex consisting of ERC2, RIMS1 and UNC13A. As to expression, predominantly expressed in brain, including hippocampus, cortex, cerebellum, amygdala and olfactory bulb.

Its subcellular location is the cytoplasm. It localises to the synapse. The protein resides in the presynaptic active zone. The protein localises to the cytoskeleton. Functionally, thought to be involved in the organization of the cytomatrix at the nerve terminals active zone (CAZ) which regulates neurotransmitter release. Seems to act together with BSN. May recruit liprin-alpha proteins to the CAZ. The protein is ERC protein 2 (Erc2) of Rattus norvegicus (Rat).